Consider the following 85-residue polypeptide: MHHRDLLAIIIISALLFINVILWGFILRKYLEQKEQDRKEREILERLRRIREIRDDSDYESNGEEEQEVMDLVLSHGFDNPMFEP.

Over 1 to 7 the chain is Extracellular; it reads MHHRDLL. Residues 8–28 traverse the membrane as a helical segment; it reads AIIIISALLFINVILWGFILR. At 29–85 the chain is on the cytoplasmic side; it reads KYLEQKEQDRKEREILERLRRIREIRDDSDYESNGEEEQEVMDLVLSHGFDNPMFEP.

It belongs to the HIV-1 VPU protein family. As to quaternary structure, homopentamer. Interacts with host CD4 and BRTC; these interactions induce proteasomal degradation of CD4. Interacts with host BST2; this interaction leads to the degradation of host BST2. Interacts with host FBXW11. Interacts with host AP1M1; this interaction plays a role in the mistrafficking and subsequent degradation of host BST2. Interacts with host RANBP2; this interaction allows Vpu to down-regulate host BLM sumoylation. Post-translationally, phosphorylated by host CK2. This phosphorylation is necessary for interaction with human BTRC and degradation of CD4.

It is found in the host membrane. Its activity is regulated as follows. Ion channel activity is inhibited by hexamethylene amiloride in vitro. Functionally, enhances virion budding by targeting host CD4 and Tetherin/BST2 to proteasome degradation. Degradation of CD4 prevents any unwanted premature interactions between viral Env and its host receptor CD4 in the endoplasmic reticulum. Degradation of antiretroviral protein Tetherin/BST2 is important for virion budding, as BST2 tethers new viral particles to the host cell membrane. Mechanistically, Vpu bridges either CD4 or BST2 to BTRC, a substrate recognition subunit of the Skp1/Cullin/F-box protein E3 ubiquitin ligase, induces their ubiquitination and subsequent proteasomal degradation. The alteration of the E3 ligase specificity by Vpu seems to promote the degradation of host IKBKB, leading to NF-kappa-B down-regulation and subsequent apoptosis. Acts as a viroporin that forms an oligomeric ion channel in membranes. Modulates the host DNA repair mechanisms to promote degradation of nuclear viral cDNA in cells that are already productively infected in order to suppress immune sensing and proviral hyper-integration (superinfection). Manipulates PML-NBs and modulates SUMOylation of host BLM protein thereby enhancing its DNA-end processing activity toward viral unintegrated linear DNA. Also inhibits RAD52-mediated homologous repair of viral cDNA, preventing the generation of dead-end circular forms of single copies of the long terminal repeat and permitting sustained nucleolytic attack. The chain is Protein Vpu from Human immunodeficiency virus type 1 group O (isolate ANT70) (HIV-1).